A 239-amino-acid polypeptide reads, in one-letter code: RNA polymerase sigma-E factor (239 aa).

Positions M1–I29 are cleaved as a propeptide — removed by SpoIIGA. The Polymerase core binding signature appears at D86–V99. The H-T-H motif DNA-binding region spans Q206–K225.

Belongs to the sigma-70 factor family. Post-translationally, proteolytically cleaved in the N-terminus by SpoIIGA to yield the active peptide.

Its function is as follows. Sigma factors are initiation factors that promote the attachment of RNA polymerase to specific initiation sites and are then released. This sigma factor is responsible for the expression of sporulation specific genes. This is RNA polymerase sigma-E factor (sigE) from Bacillus subtilis (strain 168).